Consider the following 210-residue polypeptide: Protein GrpE (210 aa).

The disordered stretch occupies residues 191-210; the sequence is KGGPKPAEAETNSVFDEKDA.

The protein belongs to the GrpE family. Homodimer.

The protein localises to the cytoplasm. In terms of biological role, participates actively in the response to hyperosmotic and heat shock by preventing the aggregation of stress-denatured proteins, in association with DnaK and GrpE. It is the nucleotide exchange factor for DnaK and may function as a thermosensor. Unfolded proteins bind initially to DnaJ; upon interaction with the DnaJ-bound protein, DnaK hydrolyzes its bound ATP, resulting in the formation of a stable complex. GrpE releases ADP from DnaK; ATP binding to DnaK triggers the release of the substrate protein, thus completing the reaction cycle. Several rounds of ATP-dependent interactions between DnaJ, DnaK and GrpE are required for fully efficient folding. The protein is Protein GrpE of Rhizobium etli (strain CIAT 652).